The primary structure comprises 721 residues: K(+)-insensitive pyrophosphate-energized proton pump (721 aa).

Transmembrane regions (helical) follow at residues 8–28 (LLGV…AVWV), 57–77 (YRTL…AIDM), 82–102 (FGLT…AGYL), 136–156 (VMGL…YLVF), and 168–188 (LVAL…GGGI). Residue Lys191 coordinates substrate. Residues Asp194, Asp198, Asn221, and Asp224 each coordinate Mg(2+). A run of 5 helical transmembrane segments spans residues 247–267 (AIFL…IILF), 294–314 (ISLA…IGAF), 323–343 (ALAL…IVKI), 374–394 (YGVG…VLGI), and 416–436 (AGIF…GIII). Residue Asp446 coordinates Mg(2+). 4 consecutive transmembrane segments (helical) span residues 483–503 (AIAS…FEIV), 527–547 (LINA…YFFS), 599–619 (FLIP…LLGW), and 621–641 (ALAG…LLMA). 3 residues coordinate Ca(2+): Asp648, Asp672, and Asp676. Residue Lys679 coordinates substrate. A helical transmembrane segment spans residues 698 to 718 (VVFTYVIVSTNIALGIWPSGL).

Belongs to the H(+)-translocating pyrophosphatase (TC 3.A.10) family. K(+)-insensitive subfamily. As to quaternary structure, homodimer. The cofactor is Mg(2+).

It localises to the cell membrane. The enzyme catalyses diphosphate + H2O + H(+)(in) = 2 phosphate + 2 H(+)(out). Proton pump that utilizes the energy of pyrophosphate hydrolysis as the driving force for proton movement across the membrane. Generates a proton motive force. The chain is K(+)-insensitive pyrophosphate-energized proton pump from Pyrobaculum aerophilum (strain ATCC 51768 / DSM 7523 / JCM 9630 / CIP 104966 / NBRC 100827 / IM2).